Consider the following 394-residue polypeptide: MSKEKFERTKPHVNVGTIGHVDHGKTTLTAAITTVLAKTYGGSARAFDQIDNAPEEKARGITINTSHVEYDTPARHYAHVDCPGHADYVKNMITGAAQMDGAILVVAATDGPMPQTREHILLGRQVGVPYIIVFLNKCDMVDDEELLELVEMEVRELLSQYDFPGDDTPVIRGSALKALEGDAEWEAKIIELAEALDSYIPQPERAIDRPFLLPIEDVFSISGRGTVVTGRVERGIVKVGEEVEIVGIIDTIKTTCTGVEMFRKLLDEGRAGENVGVLLRGTKRDDVQRGQVLAKPGSIKPHTKFESEVYILSKDEGGRHTPFFKGYRPQFYFRTTDVTGTIELPEGVEMVMPGDNVNMVVNLIAPIAMDDGLRFAIREGGRTVGAGVVAKVIE.

Residues 10 to 204 form the tr-type G domain; sequence KPHVNVGTIG…ALDSYIPQPE (195 aa). The G1 stretch occupies residues 19 to 26; it reads GHVDHGKT. 19 to 26 is a GTP binding site; it reads GHVDHGKT. A Mg(2+)-binding site is contributed by Thr-26. Residues 60–64 form a G2 region; it reads GITIN. Residues 81–84 form a G3 region; that stretch reads DCPG. Residues 81–85 and 136–139 each bind GTP; these read DCPGH and NKCD. Positions 136 to 139 are G4; the sequence is NKCD. Residues 174–176 are G5; it reads SAL.

This sequence belongs to the TRAFAC class translation factor GTPase superfamily. Classic translation factor GTPase family. EF-Tu/EF-1A subfamily. In terms of assembly, monomer.

It localises to the cytoplasm. The enzyme catalyses GTP + H2O = GDP + phosphate + H(+). GTP hydrolase that promotes the GTP-dependent binding of aminoacyl-tRNA to the A-site of ribosomes during protein biosynthesis. The chain is Elongation factor Tu 2 from Yersinia pestis bv. Antiqua (strain Antiqua).